Consider the following 550-residue polypeptide: Transcriptional repressor RHIT (550 aa).

Disordered regions lie at residues 1 to 67 (MSAD…ETRA), 174 to 200 (VQGK…VVEV), and 216 to 296 (KSFK…EGLA). Composition is skewed to basic and acidic residues over residues 11-22 (AQDKERARETPG), 45-58 (ESPH…EPHP), and 187-200 (LGHE…VVEV). The KRAB domain maps to 124–193 (VTFEDMALYL…SRQLGHEEEE (70 aa)). K216 is covalently cross-linked (Glycyl lysine isopeptide (Lys-Gly) (interchain with G-Cter in SUMO2)). Positions 267 to 281 (DLPKTQEGHFPEQPR) are enriched in basic and acidic residues. A Phosphoserine modification is found at S290. C2H2-type zinc fingers lie at residues 306 to 328 (YKCE…RRTH), 334 to 356 (YACT…QIIH), 362 to 384 (YTCP…QRIH), 390 to 412 (YVCD…QGTH), 418 to 440 (HKCP…QRTH), 446 to 468 (YPCP…NRTH), 474 to 496 (YHCL…QRTH), and 502 to 524 (YSCP…EKIH).

The protein belongs to the krueppel C2H2-type zinc-finger protein family.

Its subcellular location is the nucleus. In terms of biological role, transcriptional repressor involved in regulating MPV17L expression. By regulating MPV17L expression, contributes to the regulation of genes involved in H(2)O(2) metabolism and the mitochondrial apoptotic cascade. In Bos taurus (Bovine), this protein is Transcriptional repressor RHIT (ZNF205).